Here is a 159-residue protein sequence, read N- to C-terminus: 3-hydroxyacyl-[acyl-carrier-protein] dehydratase FabZ (159 aa).

Residue H58 is part of the active site.

Belongs to the thioester dehydratase family. FabZ subfamily.

The protein resides in the cytoplasm. It carries out the reaction a (3R)-hydroxyacyl-[ACP] = a (2E)-enoyl-[ACP] + H2O. In terms of biological role, involved in unsaturated fatty acids biosynthesis. Catalyzes the dehydration of short chain beta-hydroxyacyl-ACPs and long chain saturated and unsaturated beta-hydroxyacyl-ACPs. The protein is 3-hydroxyacyl-[acyl-carrier-protein] dehydratase FabZ of Helicobacter pylori (strain G27).